Here is a 142-residue protein sequence, read N- to C-terminus: Large ribosomal subunit protein uL13 (142 aa).

It belongs to the universal ribosomal protein uL13 family. Part of the 50S ribosomal subunit.

Functionally, this protein is one of the early assembly proteins of the 50S ribosomal subunit, although it is not seen to bind rRNA by itself. It is important during the early stages of 50S assembly. The protein is Large ribosomal subunit protein uL13 of Francisella tularensis subsp. holarctica (strain FTNF002-00 / FTA).